The following is a 698-amino-acid chain: Elongation factor G (698 aa).

Residues 10-285 form the tr-type G domain; sequence AATRNIGIMA…AVVDFLPSPT (276 aa). GTP contacts are provided by residues 19 to 26, 83 to 87, and 137 to 140; these read AHIDAGKT, DTPGH, and NKMD.

The protein belongs to the TRAFAC class translation factor GTPase superfamily. Classic translation factor GTPase family. EF-G/EF-2 subfamily.

The protein resides in the cytoplasm. Catalyzes the GTP-dependent ribosomal translocation step during translation elongation. During this step, the ribosome changes from the pre-translocational (PRE) to the post-translocational (POST) state as the newly formed A-site-bound peptidyl-tRNA and P-site-bound deacylated tRNA move to the P and E sites, respectively. Catalyzes the coordinated movement of the two tRNA molecules, the mRNA and conformational changes in the ribosome. The protein is Elongation factor G of Parafrankia sp. (strain EAN1pec).